Consider the following 76-residue polypeptide: Small ribosomal subunit protein bS18 (76 aa).

It belongs to the bacterial ribosomal protein bS18 family. As to quaternary structure, part of the 30S ribosomal subunit. Forms a tight heterodimer with protein bS6.

In terms of biological role, binds as a heterodimer with protein bS6 to the central domain of the 16S rRNA, where it helps stabilize the platform of the 30S subunit. In Psychrobacter arcticus (strain DSM 17307 / VKM B-2377 / 273-4), this protein is Small ribosomal subunit protein bS18.